The chain runs to 884 residues: Translation initiation factor IF-2 (884 aa).

2 disordered regions span residues 42-62 (DVQK…QEEV) and 123-254 (EPKG…GGKK). The span at 194-212 (PAERREVVIPPKRKMEERA) shows a compositional bias: basic and acidic residues. Over residues 234 to 248 (EPETPAGGAPGAKKG) the composition is skewed to low complexity. The tr-type G domain maps to 384–553 (KRPPVVTIMG…LLQADVMDLK (170 aa)). The G1 stretch occupies residues 393 to 400 (GHVDHGKT). Residue 393-400 (GHVDHGKT) coordinates GTP. The tract at residues 418–422 (GITQH) is G2. Residues 439 to 442 (DTPG) form a G3 region. Residues 439-443 (DTPGH) and 493-496 (NKID) contribute to the GTP site. The segment at 493–496 (NKID) is G4. Residues 529–531 (SAK) form a G5 region.

It belongs to the TRAFAC class translation factor GTPase superfamily. Classic translation factor GTPase family. IF-2 subfamily.

Its subcellular location is the cytoplasm. Its function is as follows. One of the essential components for the initiation of protein synthesis. Protects formylmethionyl-tRNA from spontaneous hydrolysis and promotes its binding to the 30S ribosomal subunits. Also involved in the hydrolysis of GTP during the formation of the 70S ribosomal complex. The chain is Translation initiation factor IF-2 from Geobacter metallireducens (strain ATCC 53774 / DSM 7210 / GS-15).